The following is a 122-amino-acid chain: Large ribosomal subunit protein uL18 (122 aa).

The disordered stretch occupies residues 1–26; sequence MSNLSRKQQTQKRHRRLRRHLKGTAQ. Basic residues predominate over residues 9–22; the sequence is QTQKRHRRLRRHLK.

It belongs to the universal ribosomal protein uL18 family. Part of the 50S ribosomal subunit; part of the 5S rRNA/L5/L18/L25 subcomplex. Contacts the 5S and 23S rRNAs.

In terms of biological role, this is one of the proteins that bind and probably mediate the attachment of the 5S RNA into the large ribosomal subunit, where it forms part of the central protuberance. This Prochlorococcus marinus (strain MIT 9313) protein is Large ribosomal subunit protein uL18.